Here is a 572-residue protein sequence, read N- to C-terminus: Urease subunit alpha (572 aa).

The region spanning 134–572 is the Urease domain; the sequence is GGIDSHIHFI…LPLAQRYFLF (439 aa). Ni(2+) contacts are provided by H139, H141, and K222. K222 is modified (N6-carboxylysine). Residue H224 participates in substrate binding. Positions 251 and 277 each coordinate Ni(2+). Residue H325 is the Proton donor of the active site. D365 is a binding site for Ni(2+).

Belongs to the metallo-dependent hydrolases superfamily. Urease alpha subunit family. Heterotrimer of UreA (gamma), UreB (beta) and UreC (alpha) subunits. Three heterotrimers associate to form the active enzyme. The cofactor is Ni cation. Post-translationally, carboxylation allows a single lysine to coordinate two nickel ions.

Its subcellular location is the cytoplasm. It carries out the reaction urea + 2 H2O + H(+) = hydrogencarbonate + 2 NH4(+). The protein operates within nitrogen metabolism; urea degradation; CO(2) and NH(3) from urea (urease route): step 1/1. This Paracidovorax citrulli (strain AAC00-1) (Acidovorax citrulli) protein is Urease subunit alpha.